Consider the following 330-residue polypeptide: Ketol-acid reductoisomerase (NADP(+)) (330 aa).

Positions 1-181 constitute a KARI N-terminal Rossmann domain; sequence MNVYYEKDAD…GGTKAGVIET (181 aa). NADP(+) contacts are provided by residues 24–27, Arg-47, Ser-50, Ser-52, and 82–85; these read YGSQ and DQNQ. The active site involves His-107. Residue Gly-133 coordinates NADP(+). One can recognise a KARI C-terminal knotted domain in the interval 182–327; sequence NFKNETETDL…AKLRNMMSWL (146 aa). Residues Asp-190, Glu-194, Glu-226, and Glu-230 each contribute to the Mg(2+) site. Residue Ser-251 coordinates substrate.

This sequence belongs to the ketol-acid reductoisomerase family. Mg(2+) serves as cofactor.

The catalysed reaction is (2R)-2,3-dihydroxy-3-methylbutanoate + NADP(+) = (2S)-2-acetolactate + NADPH + H(+). The enzyme catalyses (2R,3R)-2,3-dihydroxy-3-methylpentanoate + NADP(+) = (S)-2-ethyl-2-hydroxy-3-oxobutanoate + NADPH + H(+). The protein operates within amino-acid biosynthesis; L-isoleucine biosynthesis; L-isoleucine from 2-oxobutanoate: step 2/4. It functions in the pathway amino-acid biosynthesis; L-valine biosynthesis; L-valine from pyruvate: step 2/4. Its function is as follows. Involved in the biosynthesis of branched-chain amino acids (BCAA). Catalyzes an alkyl-migration followed by a ketol-acid reduction of (S)-2-acetolactate (S2AL) to yield (R)-2,3-dihydroxy-isovalerate. In the isomerase reaction, S2AL is rearranged via a Mg-dependent methyl migration to produce 3-hydroxy-3-methyl-2-ketobutyrate (HMKB). In the reductase reaction, this 2-ketoacid undergoes a metal-dependent reduction by NADPH to yield (R)-2,3-dihydroxy-isovalerate. The protein is Ketol-acid reductoisomerase (NADP(+)) of Chlorobium chlorochromatii (strain CaD3).